The primary structure comprises 242 residues: GLIPR1-like protein 1 (242 aa).

The signal sequence occupies residues 1-22; it reads MALKNKFSCLWILGLCLVATTS. Residues 39 to 171 form the SCP domain; it reads EAHNEWRGKV…ASTAIFVCNY (133 aa). N119 carries an N-linked (GlcNAc...) asparagine glycan. Residue G221 is the site of GPI-anchor amidated glycine attachment. The propeptide at 222–242 is removed in mature form; it reads RAPQQTAFNPFSLGFLLLRIF.

The protein belongs to the CRISP family. Part of a oolemmal binding multimeric complex (IZUMO1 complex) composed at least of IZUMO1 and GLIPR1L1; the complex assemblage is influenced by the maturation status of the male germ cell. Interacts with IZUMO1. N-glycosylated. N-glycosylation decreases during the transit in the caput. In terms of tissue distribution, highly expressed in testis.

The protein localises to the cytoplasmic vesicle. It is found in the secretory vesicle. It localises to the acrosome. The protein resides in the cell membrane. Its subcellular location is the membrane raft. The protein localises to the secreted. Its function is as follows. Required for optimal fertilization at the stage of sperm-oocyte fusion, plays a role in optimizing acrosome function, the translocation of IZUMO1 during the acrosome reaction and the fertilization process. Component of epididymosomes, one type of membranous microvesicules which mediate the transfer of lipids and proteins to spermatozoa plasma membrane during epididymal maturation. Also component of the CD9-positive microvesicules found in the cauda region. This Homo sapiens (Human) protein is GLIPR1-like protein 1 (GLIPR1L1).